The primary structure comprises 192 residues: Xanthine phosphoribosyltransferase (192 aa).

Leu-20 and Asn-27 together coordinate xanthine. 5-phospho-alpha-D-ribose 1-diphosphate is bound at residue 128-132 (AHGEA). Residue Lys-156 participates in xanthine binding.

This sequence belongs to the purine/pyrimidine phosphoribosyltransferase family. Xpt subfamily. As to quaternary structure, homodimer.

Its subcellular location is the cytoplasm. The enzyme catalyses XMP + diphosphate = xanthine + 5-phospho-alpha-D-ribose 1-diphosphate. It participates in purine metabolism; XMP biosynthesis via salvage pathway; XMP from xanthine: step 1/1. Functionally, converts the preformed base xanthine, a product of nucleic acid breakdown, to xanthosine 5'-monophosphate (XMP), so it can be reused for RNA or DNA synthesis. This is Xanthine phosphoribosyltransferase from Lactobacillus gasseri (strain ATCC 33323 / DSM 20243 / BCRC 14619 / CIP 102991 / JCM 1131 / KCTC 3163 / NCIMB 11718 / NCTC 13722 / AM63).